The sequence spans 235 residues: REF/SRPP-like protein At2g47780 (235 aa).

The segment covering 1–12 (MAEDEIVVEEEQ) has biased composition (acidic residues). Positions 1 to 32 (MAEDEIVVEEEQSQPQEITPVPPSSSSSPSLV) are disordered.

Belongs to the REF/SRPP family.

In Arabidopsis thaliana (Mouse-ear cress), this protein is REF/SRPP-like protein At2g47780.